We begin with the raw amino-acid sequence, 373 residues long: tRNA (guanine(26)-N(2))-dimethyltransferase (373 aa).

The 364-residue stretch at 2-365 (KIISEGETKL…AELSDLVVLI (364 aa)) folds into the Trm1 methyltransferase domain. 5 residues coordinate S-adenosyl-L-methionine: Arg-35, Arg-66, Asp-86, Asp-113, and Ala-114.

It belongs to the class I-like SAM-binding methyltransferase superfamily. Trm1 family.

The catalysed reaction is guanosine(26) in tRNA + 2 S-adenosyl-L-methionine = N(2)-dimethylguanosine(26) in tRNA + 2 S-adenosyl-L-homocysteine + 2 H(+). In terms of biological role, dimethylates a single guanine residue at position 26 of a number of tRNAs using S-adenosyl-L-methionine as donor of the methyl groups. The polypeptide is tRNA (guanine(26)-N(2))-dimethyltransferase (Methanococcus maripaludis (strain C6 / ATCC BAA-1332)).